Here is a 473-residue protein sequence, read N- to C-terminus: Glutamate--tRNA ligase 1 (473 aa).

The 'HIGH' region motif lies at 11 to 21 (PSPTGYLHIGG). Over residues 113-133 (KARAEGRPPRYDGRWRDRDPS) the composition is skewed to basic and acidic residues. The tract at residues 113 to 136 (KARAEGRPPRYDGRWRDRDPSEAP) is disordered. A 'KMSKS' region motif is present at residues 240 to 244 (KLSKR). Position 243 (Lys243) interacts with ATP.

It belongs to the class-I aminoacyl-tRNA synthetase family. Glutamate--tRNA ligase type 1 subfamily. Monomer.

The protein resides in the cytoplasm. The catalysed reaction is tRNA(Glu) + L-glutamate + ATP = L-glutamyl-tRNA(Glu) + AMP + diphosphate. In terms of biological role, catalyzes the attachment of glutamate to tRNA(Glu) in a two-step reaction: glutamate is first activated by ATP to form Glu-AMP and then transferred to the acceptor end of tRNA(Glu). The chain is Glutamate--tRNA ligase 1 from Brucella melitensis biotype 1 (strain ATCC 23456 / CCUG 17765 / NCTC 10094 / 16M).